Reading from the N-terminus, the 70-residue chain is Small ribosomal subunit protein bS21C (70 aa).

The interval 38 to 70 is disordered; sequence YEKPTTERKRKKAAAVARLRKQVRRSMPPKKKY. A compositionally biased stretch (basic residues) spans 45–70; it reads RKRKKAAAVARLRKQVRRSMPPKKKY.

This sequence belongs to the bacterial ribosomal protein bS21 family.

The polypeptide is Small ribosomal subunit protein bS21C (Burkholderia thailandensis (strain ATCC 700388 / DSM 13276 / CCUG 48851 / CIP 106301 / E264)).